The following is a 506-amino-acid chain: Squalene monooxygenase 1,1 (506 aa).

2 consecutive transmembrane segments (helical) span residues 3–23 (LAFPHVCLWTLLAFVLTWTVF) and 47–67 (DADVIIVGAGVGGSALAYALA). Residues 57–58 (VG), 77–78 (ER), R85, F90, R157, V173, D336, and M349 contribute to the FAD site. The chain crosses the membrane as a helical span at residues 447 to 467 (LIFHLCGITLSSIGQLLSPFP).

Belongs to the squalene monooxygenase family. Requires FAD as cofactor.

The protein resides in the membrane. The enzyme catalyses squalene + reduced [NADPH--hemoprotein reductase] + O2 = (S)-2,3-epoxysqualene + oxidized [NADPH--hemoprotein reductase] + H2O + H(+). The protein operates within terpene metabolism; lanosterol biosynthesis; lanosterol from farnesyl diphosphate: step 2/3. Catalyzes the stereospecific oxidation of squalene to (S)-2,3-epoxysqualene, and is considered to be a rate-limiting enzyme in steroid biosynthesis. This chain is Squalene monooxygenase 1,1 (SQP1,1), found in Brassica napus (Rape).